Here is a 156-residue protein sequence, read N- to C-terminus: ATP synthase subunit b (156 aa).

Residues 7–29 traverse the membrane as a helical segment; the sequence is LLGQAISFLLFVWFCMKFVWPPL.

This sequence belongs to the ATPase B chain family. F-type ATPases have 2 components, F(1) - the catalytic core - and F(0) - the membrane proton channel. F(1) has five subunits: alpha(3), beta(3), gamma(1), delta(1), epsilon(1). F(0) has three main subunits: a(1), b(2) and c(10-14). The alpha and beta chains form an alternating ring which encloses part of the gamma chain. F(1) is attached to F(0) by a central stalk formed by the gamma and epsilon chains, while a peripheral stalk is formed by the delta and b chains.

The protein resides in the cell inner membrane. Its function is as follows. F(1)F(0) ATP synthase produces ATP from ADP in the presence of a proton or sodium gradient. F-type ATPases consist of two structural domains, F(1) containing the extramembraneous catalytic core and F(0) containing the membrane proton channel, linked together by a central stalk and a peripheral stalk. During catalysis, ATP synthesis in the catalytic domain of F(1) is coupled via a rotary mechanism of the central stalk subunits to proton translocation. In terms of biological role, component of the F(0) channel, it forms part of the peripheral stalk, linking F(1) to F(0). This Shewanella pealeana (strain ATCC 700345 / ANG-SQ1) protein is ATP synthase subunit b.